The chain runs to 172 residues: L-methionine sulfoximine/L-methionine sulfone acetyltransferase (172 aa).

In terms of domain architecture, N-acetyltransferase spans 3–166; the sequence is ASIRDAGVAD…DLTFMQLNLD (164 aa). Residues 75 to 77 and 85 to 87 each bind substrate; these read RPF and EHS. Acetyl-CoA is bound by residues 88 to 90, 96 to 101, and Asn-127; these read VYV and GKGLGV.

As to quaternary structure, homodimer.

The enzyme catalyses L-methionine sulfoximine + acetyl-CoA = N-acetyl-L-methionine sulfoximine + CoA + H(+). It catalyses the reaction L-methionine sulfone + acetyl-CoA = N-acetyl-L-methionine sulfone + CoA + H(+). Plays a role in the resistance against the toxic effects of L-methionine sulfoximine (MSX), a rare amino acid, which inhibits glutamine synthetase (GlnA). Catalyzes the acetylation of L-methionine sulfoximine (MSX). It can also use L-methionine sulfone (MSO). This chain is L-methionine sulfoximine/L-methionine sulfone acetyltransferase, found in Pseudomonas paraeruginosa (strain DSM 24068 / PA7) (Pseudomonas aeruginosa (strain PA7)).